The primary structure comprises 276 residues: Pantothenate synthetase (276 aa).

Residue 27–34 (MGALHKGH) coordinates ATP. The Proton donor role is filled by His34. (R)-pantoate is bound at residue Gln58. Gln58 lines the beta-alanine pocket. Residue 147–150 (GKKD) participates in ATP binding. Gln153 provides a ligand contact to (R)-pantoate. ATP-binding positions include Val176 and 184–187 (LSSR).

Belongs to the pantothenate synthetase family. Homodimer.

It localises to the cytoplasm. The enzyme catalyses (R)-pantoate + beta-alanine + ATP = (R)-pantothenate + AMP + diphosphate + H(+). It participates in cofactor biosynthesis; (R)-pantothenate biosynthesis; (R)-pantothenate from (R)-pantoate and beta-alanine: step 1/1. Its function is as follows. Catalyzes the condensation of pantoate with beta-alanine in an ATP-dependent reaction via a pantoyl-adenylate intermediate. This Helicobacter pylori (strain ATCC 700392 / 26695) (Campylobacter pylori) protein is Pantothenate synthetase.